We begin with the raw amino-acid sequence, 119 residues long: Large ribosomal subunit protein uL22 (119 aa).

This sequence belongs to the universal ribosomal protein uL22 family. Part of the 50S ribosomal subunit.

This protein binds specifically to 23S rRNA; its binding is stimulated by other ribosomal proteins, e.g. L4, L17, and L20. It is important during the early stages of 50S assembly. It makes multiple contacts with different domains of the 23S rRNA in the assembled 50S subunit and ribosome. Functionally, the globular domain of the protein is located near the polypeptide exit tunnel on the outside of the subunit, while an extended beta-hairpin is found that lines the wall of the exit tunnel in the center of the 70S ribosome. This is Large ribosomal subunit protein uL22 from Rickettsia typhi (strain ATCC VR-144 / Wilmington).